The following is a 542-amino-acid chain: CTP synthase (542 aa).

Residues 1 to 265 (MTRYIFVTGG…DDFVVERFGL (265 aa)) are amidoligase domain. Ser-13 contacts CTP. Residue Ser-13 coordinates UTP. Residues 14–19 (SLGKGI) and Asp-71 contribute to the ATP site. 2 residues coordinate Mg(2+): Asp-71 and Glu-139. CTP-binding positions include 146 to 148 (DIE), 186 to 191 (KTKPTQ), and Lys-222. UTP-binding positions include 186 to 191 (KTKPTQ) and Lys-222. The Glutamine amidotransferase type-1 domain maps to 290-541 (TIAMVGKYME…VKAALAQKNK (252 aa)). Gly-351 contributes to the L-glutamine binding site. The active-site Nucleophile; for glutamine hydrolysis is the Cys-378. Residues 379 to 382 (LGMQ), Glu-402, and Arg-469 contribute to the L-glutamine site. Active-site residues include His-514 and Glu-516.

It belongs to the CTP synthase family. As to quaternary structure, homotetramer.

The catalysed reaction is UTP + L-glutamine + ATP + H2O = CTP + L-glutamate + ADP + phosphate + 2 H(+). It catalyses the reaction L-glutamine + H2O = L-glutamate + NH4(+). The enzyme catalyses UTP + NH4(+) + ATP = CTP + ADP + phosphate + 2 H(+). It participates in pyrimidine metabolism; CTP biosynthesis via de novo pathway; CTP from UDP: step 2/2. With respect to regulation, allosterically activated by GTP, when glutamine is the substrate; GTP has no effect on the reaction when ammonia is the substrate. The allosteric effector GTP functions by stabilizing the protein conformation that binds the tetrahedral intermediate(s) formed during glutamine hydrolysis. Inhibited by the product CTP, via allosteric rather than competitive inhibition. Functionally, catalyzes the ATP-dependent amination of UTP to CTP with either L-glutamine or ammonia as the source of nitrogen. Regulates intracellular CTP levels through interactions with the four ribonucleotide triphosphates. This chain is CTP synthase, found in Pseudomonas entomophila (strain L48).